A 520-amino-acid chain; its full sequence is MEELQGYLEKDRSRQQHFLYPLLFQEYIYALAHNHGLNGSIFYEPVEVFGYDNKSSLVLVKRLITRIYQQNFLISLVNDSNQNRFVGYNHNNFFFSHFHSQMISESFAIIVEIPFSLRLVSYFEEKEIPKYHNLRSIHSIFPFLEDKLSHLNYVSDILIPHPIHMEILVQILQCWIQDVPFLHLLRFFLHEYHNLNSLLITQKKSIYVFSKENKRLFRFLYNSYVFEWEFLLVFIRKQSSYLRLISSGTFLERIHFYEKMEHLQMEHFVVVCRNYFHRTLWFCKDSFMHYVRYQGKAILASKGTHLLMKKWKYHFFNFWQYYFHVWSQPYRIHINQLSNYSFYFLGYLSSLLLNLSAVRNQMLENSFLIDTITKKFDTIVPVIFLIGSLAKAQFCTVSGHPISKPIWADLSDSDILDRFGRICRNISHYHSGSSKKQGLYRIKYILRLSCARTLARKHKSTVRTFLRRLGSGLLEEFFTEEEQVLSLIFPKTTPFILHRSHRERIWYLDIIRINDLVNHS.

The protein belongs to the intron maturase 2 family. MatK subfamily.

The protein resides in the plastid. It is found in the chloroplast. Usually encoded in the trnK tRNA gene intron. Probably assists in splicing its own and other chloroplast group II introns. The sequence is that of Maturase K from Maianthemum dilatatum (False lily-of-the-valley).